A 177-amino-acid polypeptide reads, in one-letter code: uncharacterized protein (177 aa).

Residues 122–177 (LPFTRNGSGQQSNKLRDPKKGRTHKPKPSEKHKKNKTGKKGAQEKTHRSRSSRKGN) are disordered. Basic residues-rich tracts occupy residues 142-160 (GRTH…KTGK) and 168-177 (HRSRSSRKGN).

This is an uncharacterized protein from Saccharomyces cerevisiae (strain ATCC 204508 / S288c) (Baker's yeast).